The following is a 41-amino-acid chain: Large ribosomal subunit protein bL36 (41 aa).

This sequence belongs to the bacterial ribosomal protein bL36 family.

The polypeptide is Large ribosomal subunit protein bL36 (Nitrobacter winogradskyi (strain ATCC 25391 / DSM 10237 / CIP 104748 / NCIMB 11846 / Nb-255)).